The chain runs to 341 residues: DNA-directed RNA polymerase subunit alpha (341 aa).

Positions 1–233 (MIQDEVPVSA…DLFLPFLHTE (233 aa)) are alpha N-terminal domain (alpha-NTD). The segment at 262–341 (DRMAKEVAFK…NLPRNKFSID (80 aa)) is alpha C-terminal domain (alpha-CTD).

It belongs to the RNA polymerase alpha chain family. In plastids the minimal PEP RNA polymerase catalytic core is composed of four subunits: alpha, beta, beta', and beta''. When a (nuclear-encoded) sigma factor is associated with the core the holoenzyme is formed, which can initiate transcription.

The protein localises to the plastid. It localises to the chloroplast. It carries out the reaction RNA(n) + a ribonucleoside 5'-triphosphate = RNA(n+1) + diphosphate. Functionally, DNA-dependent RNA polymerase catalyzes the transcription of DNA into RNA using the four ribonucleoside triphosphates as substrates. The sequence is that of DNA-directed RNA polymerase subunit alpha from Angiopteris evecta (Mule's foot fern).